The sequence spans 61 residues: Protein stunted (61 aa).

Residues 3 to 15 are sufficient for mth activation; sequence AWRAAGITYIQYS.

Belongs to the eukaryotic ATPase epsilon family.

Functionally, activates the G-protein coupled receptor mth in vitro, leading to increased intracellular calcium ion levels. The polypeptide is Protein stunted (Drosophila melanogaster (Fruit fly)).